The primary structure comprises 175 residues: Ribosome maturation factor RimM (175 aa).

Positions 96–175 (EDEFYWRELF…RIEVDWDPGF (80 aa)) constitute a PRC barrel domain.

This sequence belongs to the RimM family. In terms of assembly, binds ribosomal protein uS19.

The protein resides in the cytoplasm. In terms of biological role, an accessory protein needed during the final step in the assembly of 30S ribosomal subunit, possibly for assembly of the head region. Essential for efficient processing of 16S rRNA. May be needed both before and after RbfA during the maturation of 16S rRNA. It has affinity for free ribosomal 30S subunits but not for 70S ribosomes. This Aliivibrio fischeri (strain ATCC 700601 / ES114) (Vibrio fischeri) protein is Ribosome maturation factor RimM.